Here is a 436-residue protein sequence, read N- to C-terminus: Trigger factor (436 aa).

The 86-residue stretch at 163–248 (GDRVTVDFEG…VKKIEAANLP (86 aa)) folds into the PPIase FKBP-type domain.

It belongs to the FKBP-type PPIase family. Tig subfamily.

The protein localises to the cytoplasm. The enzyme catalyses [protein]-peptidylproline (omega=180) = [protein]-peptidylproline (omega=0). Involved in protein export. Acts as a chaperone by maintaining the newly synthesized protein in an open conformation. Functions as a peptidyl-prolyl cis-trans isomerase. The polypeptide is Trigger factor (Delftia acidovorans (strain DSM 14801 / SPH-1)).